Consider the following 142-residue polypeptide: Peptide methionine sulfoxide reductase MsrB (142 aa).

A MsrB domain is found at 3–126 (KEELKKKLSP…NSAALRFIPF (124 aa)). Residue Cys-115 is the Nucleophile of the active site.

This sequence belongs to the MsrB Met sulfoxide reductase family.

It catalyses the reaction L-methionyl-[protein] + [thioredoxin]-disulfide + H2O = L-methionyl-(R)-S-oxide-[protein] + [thioredoxin]-dithiol. This is Peptide methionine sulfoxide reductase MsrB from Lactococcus lactis subsp. cremoris (strain SK11).